Reading from the N-terminus, the 92-residue chain is Small ribosomal subunit protein uS19 (92 aa).

This sequence belongs to the universal ribosomal protein uS19 family.

In terms of biological role, protein S19 forms a complex with S13 that binds strongly to the 16S ribosomal RNA. In Borrelia duttonii (strain Ly), this protein is Small ribosomal subunit protein uS19.